Consider the following 373-residue polypeptide: MPLPDFHSSDPFTLGIELELQVVNPPGYDLSQDSSALIAAVKNDIKAGEVKHDITESMLEIATGVCQNIDQAAAQFSAMQQAILRAAGDQHIQIAGGGTHPFQKWQRQEVCDDERYNHNLELFGYLILQATVFGQHVHVGCRNGDDAIYLLHGLSRFVPHFIALSASSPYMQGSDTKFASSRLNIFSGFPDNGKMPWVSNWQGFEGLFRRLSYTSMIDTIKDVHWDIRPSPHFGTVEVRVMDTPLTLAHAINIAGLIQATAHWLLTERPYKHQEQDYLLYKFNRFQACRYGLDGLLTDVNTGEQKTIAEDMKWLLDRVAPSAEKLGGASAIAEIALMLKQGKSEAQRMRDFIADGGSLISLVQKHCELWATHP.

Belongs to the glutamate--cysteine ligase type 2 family. YbdK subfamily. As to quaternary structure, homodimer.

The catalysed reaction is L-cysteine + L-glutamate + ATP = gamma-L-glutamyl-L-cysteine + ADP + phosphate + H(+). ATP-dependent carboxylate-amine ligase which exhibits weak glutamate--cysteine ligase activity. The polypeptide is Putative glutamate--cysteine ligase 2 (Enterobacter sp. (strain 638)).